The chain runs to 273 residues: Eukaryotic translation initiation factor 3 subunit G-2 (273 aa).

The disordered stretch occupies residues 168–192; sequence PPFMKDGGGGSGGKNWGRGRDRDDS. The segment covering 173-183 has biased composition (gly residues); the sequence is DGGGGSGGKNW. The RRM domain occupies 193-271; the sequence is SAVRISNLSE…LILCVEWSKP (79 aa).

It belongs to the eIF-3 subunit G family. Component of the eukaryotic translation initiation factor 3 (eIF-3) complex. The eIF-3 complex interacts with pix.

The protein resides in the cytoplasm. In terms of biological role, RNA-binding component of the eukaryotic translation initiation factor 3 (eIF-3) complex, which is involved in protein synthesis of a specialized repertoire of mRNAs and, together with other initiation factors, stimulates binding of mRNA and methionyl-tRNAi to the 40S ribosome. The eIF-3 complex specifically targets and initiates translation of a subset of mRNAs involved in cell proliferation. This subunit can bind 18S rRNA. The polypeptide is Eukaryotic translation initiation factor 3 subunit G-2 (Drosophila erecta (Fruit fly)).